The primary structure comprises 325 residues: Homocysteine S-methyltransferase 2 (325 aa).

A Hcy-binding domain is found at leucine 6–valine 321. A Phosphothreonine modification is found at threonine 138. Zn(2+) contacts are provided by cysteine 239, cysteine 306, and cysteine 307.

The cofactor is Zn(2+).

It localises to the cytoplasm. Its subcellular location is the nucleus. It catalyses the reaction S-methyl-L-methionine + L-homocysteine = 2 L-methionine + H(+). Functionally, homocysteine S-methyltransferase involved in the conversion of S-adenosylmethionine (AdoMet) to methionine to control the methionine/AdoMet ratio. Also converts S-methylmethionine (SMM) to methionine. This Saccharomyces cerevisiae (strain ATCC 204508 / S288c) (Baker's yeast) protein is Homocysteine S-methyltransferase 2 (SAM4).